A 258-amino-acid chain; its full sequence is Ubiquinone/menaquinone biosynthesis C-methyltransferase UbiE (258 aa).

Residues Thr-81, Asp-102, and Asn-130–Ala-131 contribute to the S-adenosyl-L-methionine site.

Belongs to the class I-like SAM-binding methyltransferase superfamily. MenG/UbiE family.

The catalysed reaction is a 2-demethylmenaquinol + S-adenosyl-L-methionine = a menaquinol + S-adenosyl-L-homocysteine + H(+). It catalyses the reaction a 2-methoxy-6-(all-trans-polyprenyl)benzene-1,4-diol + S-adenosyl-L-methionine = a 5-methoxy-2-methyl-3-(all-trans-polyprenyl)benzene-1,4-diol + S-adenosyl-L-homocysteine + H(+). It participates in quinol/quinone metabolism; menaquinone biosynthesis; menaquinol from 1,4-dihydroxy-2-naphthoate: step 2/2. It functions in the pathway cofactor biosynthesis; ubiquinone biosynthesis. Its function is as follows. Methyltransferase required for the conversion of demethylmenaquinol (DMKH2) to menaquinol (MKH2) and the conversion of 2-polyprenyl-6-methoxy-1,4-benzoquinol (DDMQH2) to 2-polyprenyl-3-methyl-6-methoxy-1,4-benzoquinol (DMQH2). The chain is Ubiquinone/menaquinone biosynthesis C-methyltransferase UbiE from Allorhizobium ampelinum (strain ATCC BAA-846 / DSM 112012 / S4) (Agrobacterium vitis (strain S4)).